A 2896-amino-acid polypeptide reads, in one-letter code: 3'-5' exoribonuclease HELZ2 (2896 aa).

C3H1-type zinc fingers lie at residues 90-114 (VCHYYSPGLGCRRHRNRCTFARSRE) and 217-246 (GQPPAYCRFVGRGQPCWRGESRCQFAHSAV). The segment at 287 to 311 (LYCPACLVTCHSQEAFENHCASSEH) adopts a C2H2-type; atypical zinc-finger fold. The C3H1-type 3 zinc finger occupies 327–357 (SPPPGLSKFELCPKPDLCEYGDACTKAHSAQ). The UvrD-like helicase ATP-binding domain occupies 770-1126 (VALIAGWGPG…VVLSTVHTCQ (357 aa)). 791-798 (GPFGTGKT) contacts ATP. The interaction with THRAP3 stretch occupies residues 810 to 1306 (RRPETKVLIC…ESTEAEDAEA (497 aa)). Residues 914-917 (DEAA) carry the DEAA box motif. Serine 1253 carries the post-translational modification Phosphoserine. Short sequence motifs (LXXLL motif) lie at residues 1322 to 1326 (LRELL), 1365 to 1369 (LRKLL), and 1420 to 1424 (LVQLL). The RNB domain maps to 1581–1938 (REDCRAFLTF…VLQRQILLAL (358 aa)). The LXXLL motif 4 signature appears at 2259–2263 (LEGLP). Positions 2382 to 2896 (PSRFLERQTY…RVCRRPTMPS (515 aa)) are interaction with THRAP3. A UvrD-like helicase ATP-binding 2 domain is found at 2400–2675 (LNPSQNVAVR…HMLDTQYRMH (276 aa)). Residue 2421–2428 (GPPGTGKT) participates in ATP binding. The LXXLL motif 5 signature appears at 2476-2480 (LAGLL).

The protein belongs to the DNA2/NAM7 helicase family. In terms of assembly, interacts with PPARA (via DNA-binding domain) and PPARG; the interaction stimulates the transcriptional activity of PPARA and PPARG. Interacts with THRAP3; the interaction is direct and HELZ2 and THRAP3 synergistically enhance the transcriptional activity of PPARG. It is probably part of the peroxisome proliferator activated receptor alpha interacting complex (PRIC). As to expression, expressed in various tissues including heart, pancreas, skeletal muscle, colon, spleen, liver, kidney, lung, peripheral blood and placenta.

The protein localises to the cytoplasm. It carries out the reaction Exonucleolytic cleavage in the 3'- to 5'-direction to yield nucleoside 5'-phosphates.. It catalyses the reaction ATP + H2O = ADP + phosphate + H(+). In terms of biological role, can degrade highly structured RNAs through its concerted ATP-dependent RNA helicase and 3' to 5' exoribonuclease activities. Shows a strong preference for pyrimidine over purine residues for its nuclease activity. Acts as a transcriptional coactivator for a number of nuclear receptors including PPARA, PPARG, THRA, THRB and RXRA. The protein is 3'-5' exoribonuclease HELZ2 of Homo sapiens (Human).